The sequence spans 739 residues: MKNSEIRPEKLHLRKLRKSLRKIRMKCLCSGEQMRHREEEDKKSEVGVGRDYNGSSALSTAESENAKKLDNGNIEEAELSLRETSSLNYEEARALLGRIEYQKGNIEAALRVFEGIDINGITVKMKTALTVREDRKHRRRSKGGFSTAPSPAMSKHAVSLLFEAIFLKAKSLQRLGRFQEAAESCRVILDIVETSLAEGASDNVTGDIKLQETLTKAVELLPELWKLADSPRDAILSYRRALLNHWKLDPETTARIQKEYAVFLLYSGEEAVPPNLRSQTEGSFIPRNNVEEAILLLMLLLRKVNLKRISWDAAILDHLSFALTIAGDLTALAKQFEELSPELLDQRELYHTLSLCYQGAGEGLVALGLLRKLFSEREDPNRTSGLLMASKICGERSGLAEEGLDYARKAIGNLGKECSQLDGAARFVLGITLTESSRMAVTETERIARQSEGIQALESADMTNPRVVHRLALENAEQRKLDSALAYAKEALKLGAESDLEVWLLLARVLSAQKRFSDAETIVDAALNETGKWEQGKLLRLKAKLRLAKGEVKDAIKTYTQLLALLQVQSKSFNSAKKLPKGYVKELMSLELGTWHDLAHIYINLSQWRDAESCLSRSRLIAPYSSVRYHIEGVLYNRRGQLEEAMEAFTTALDIDPMHVPSLTSKAEILLEVGNRSGIAVVRSFLMEALRIDRLNHSAWYNLGKMFKAEGSVSSMQEAVECFQAAVTLEETMPVEPFR.

The tract at residues 32 to 71 (EQMRHREEEDKKSEVGVGRDYNGSSALSTAESENAKKLDN) is disordered. The segment covering 33-45 (QMRHREEEDKKSE) has biased composition (basic and acidic residues). A compositionally biased stretch (polar residues) spans 53–63 (NGSSALSTAES). TPR repeat units lie at residues 90–127 (EEARALLGRIEYQKGNIEAALRVFEGIDINGITVKMKT), 162–195 (FEAIFLKAKSLQRLGRFQEAAESCRVILDIVETS), 215–248 (TKAVELLPELWKLADSPRDAILSYRRALLNHWKL), 465–498 (PRVVHRLALENAEQRKLDSALAYAKEALKLGAES), 500–533 (LEVWLLLARVLSAQKRFSDAETIVDAALNETGKW), 536–569 (GKLLRLKAKLRLAKGEVKDAIKTYTQLLALLQVQ), 592–625 (LGTWHDLAHIYINLSQWRDAESCLSRSRLIAPYS), 626–659 (SVRYHIEGVLYNRRGQLEEAMEAFTTALDIDPMH), and 697–733 (HSAWYNLGKMFKAEGSVSSMQEAVECFQAAVTLEETM).

Interacts with calmodulin in a calcium-dependent manner. As to expression, expressed in pollen, flowers and fruits.

The protein is Protein NPGR2 of Arabidopsis thaliana (Mouse-ear cress).